We begin with the raw amino-acid sequence, 252 residues long: Ribosomal RNA small subunit methyltransferase J (252 aa).

S-adenosyl-L-methionine is bound by residues 101–102, 117–118, 153–154, and Asp-171; these read RD, ER, and SS.

Belongs to the methyltransferase superfamily. RsmJ family.

It is found in the cytoplasm. It carries out the reaction guanosine(1516) in 16S rRNA + S-adenosyl-L-methionine = N(2)-methylguanosine(1516) in 16S rRNA + S-adenosyl-L-homocysteine + H(+). Specifically methylates the guanosine in position 1516 of 16S rRNA. This is Ribosomal RNA small subunit methyltransferase J from Pseudoalteromonas translucida (strain TAC 125).